The following is a 64-amino-acid chain: Large ribosomal subunit protein bL35 (64 aa).

The disordered stretch occupies residues 22-44; that stretch reads IMKQQAGMRHNLEVKSSKRKARL.

It belongs to the bacterial ribosomal protein bL35 family.

This Clavibacter sepedonicus (Clavibacter michiganensis subsp. sepedonicus) protein is Large ribosomal subunit protein bL35.